Reading from the N-terminus, the 230-residue chain is Flagellar L-ring protein (230 aa).

The first 22 residues, 1–22 (MSPLSNFARTALACAVAALLGG), serve as a signal peptide directing secretion. Cysteine 23 carries N-palmitoyl cysteine lipidation. Cysteine 23 carries the S-diacylglycerol cysteine lipid modification.

This sequence belongs to the FlgH family. As to quaternary structure, the basal body constitutes a major portion of the flagellar organelle and consists of four rings (L,P,S, and M) mounted on a central rod.

The protein localises to the cell outer membrane. The protein resides in the bacterial flagellum basal body. Functionally, assembles around the rod to form the L-ring and probably protects the motor/basal body from shearing forces during rotation. This Stenotrophomonas maltophilia (strain R551-3) protein is Flagellar L-ring protein.